Consider the following 32-residue polypeptide: Phallacidin proprotein (32 aa).

A propeptide spanning residues 1 to 10 (MSDINATRLP) is cleaved from the precursor. The segment at residues 11-17 (AWLVDCP) is a cross-link (cyclopeptide (Ala-Pro)). The 2'-cysteinyl-6'-hydroxytryptophan sulfoxide (Trp-Cys) cross-link spans 12 to 16 (WLVDC). Positions 18–32 (CVGDDINRLLTRGEK) are excised as a propeptide.

The protein belongs to the MSDIN fungal toxin family. Post-translationally, processed by the macrocyclase-peptidase enzyme POPB to yield a toxic cyclic heptapeptide. POPB first removes 10 residues from the N-terminus. Conformational trapping of the remaining peptide forces the enzyme to release this intermediate rather than proceed to macrocyclization. The enzyme rebinds the remaining peptide in a different conformation and catalyzes macrocyclization of the N-terminal 7 residues.

Its function is as follows. Major toxin that belongs to the bicyclic heptapeptides called phallotoxins. Although structurally related to amatoxins, phallotoxins have a different mode of action, which is the stabilization of F-actin. Phallotoxins are poisonous when administered parenterally, but not orally because of poor absorption. This chain is Phallacidin proprotein, found in Amanita pallidorosea.